The following is a 577-amino-acid chain: Proline--tRNA ligase (577 aa).

It belongs to the class-II aminoacyl-tRNA synthetase family. ProS type 1 subfamily. Homodimer.

Its subcellular location is the cytoplasm. It catalyses the reaction tRNA(Pro) + L-proline + ATP = L-prolyl-tRNA(Pro) + AMP + diphosphate. Catalyzes the attachment of proline to tRNA(Pro) in a two-step reaction: proline is first activated by ATP to form Pro-AMP and then transferred to the acceptor end of tRNA(Pro). As ProRS can inadvertently accommodate and process non-cognate amino acids such as alanine and cysteine, to avoid such errors it has two additional distinct editing activities against alanine. One activity is designated as 'pretransfer' editing and involves the tRNA(Pro)-independent hydrolysis of activated Ala-AMP. The other activity is designated 'posttransfer' editing and involves deacylation of mischarged Ala-tRNA(Pro). The misacylated Cys-tRNA(Pro) is not edited by ProRS. The protein is Proline--tRNA ligase of Helicobacter pylori (strain Shi470).